The sequence spans 276 residues: Extracellular metalloprotease 1 (276 aa).

The N-terminal stretch at methionine 1 to alanine 18 is a signal peptide. Histidine 191 contacts Zn(2+). The active site involves glutamate 192. Histidine 195 contacts Zn(2+). Residues glycine 211–serine 233 are disordered. Cysteine 227 and cysteine 253 are joined by a disulfide.

Belongs to the peptidase M43B family.

Its subcellular location is the secreted. Its function is as follows. Secreted metalloproteinase that allows assimilation of proteinaceous substrates. Pays a pivotal role as a pathogenicity determinant during infections and contributes to the ability of the pathogen to persist within the mammalian host. Digests an immunodominant cell surface antigen (SOWgp) and prevents host recognition of endospores during the phase of development when these fungal cells are most vulnerable to phagocytic cell defenses. In Coccidioides posadasii (strain C735) (Valley fever fungus), this protein is Extracellular metalloprotease 1 (MEP1).